Here is a 295-residue protein sequence, read N- to C-terminus: UDP-N-acetylenolpyruvoylglucosamine reductase (295 aa).

An FAD-binding PCMH-type domain is found at Lys24–Gly188. The active site involves Arg168. Residue Ser217 is the Proton donor of the active site. Glu287 is a catalytic residue.

It belongs to the MurB family. FAD is required as a cofactor.

The protein localises to the cytoplasm. The enzyme catalyses UDP-N-acetyl-alpha-D-muramate + NADP(+) = UDP-N-acetyl-3-O-(1-carboxyvinyl)-alpha-D-glucosamine + NADPH + H(+). Its pathway is cell wall biogenesis; peptidoglycan biosynthesis. Cell wall formation. The polypeptide is UDP-N-acetylenolpyruvoylglucosamine reductase (Rickettsia felis (strain ATCC VR-1525 / URRWXCal2) (Rickettsia azadi)).